A 678-amino-acid chain; its full sequence is Vacuolar protein sorting-associated protein 1 (678 aa).

The Dynamin-type G domain occupies 24–311; that stretch reads LIDLPQITVV…LMHHIRNTLP (288 aa). Residues 34 to 41 are G1 motif; that stretch reads RSQSSGKS. 34-41 provides a ligand contact to GTP; that stretch reads RSQSSGKS. The G2 motif stretch occupies residues 60 to 62; that stretch reads VTR. Positions 71 to 96 are disordered; sequence NRPSASGKNEETTTDSDGKDQNNSSE. Residues 78 to 90 are compositionally biased toward basic and acidic residues; sequence KNEETTTDSDGKD. The tract at residues 153–156 is G3 motif; the sequence is DLPG. GTP is bound by residues 153 to 157 and 222 to 225; these read DLPGL and TKVD. A G4 motif region spans residues 222–225; sequence TKVD. Positions 252-255 are G5 motif; the sequence is INRG. Residues 592 to 678 form the GED domain; it reads TEVIKLLIMS…LQASEIVSNV (87 aa).

The protein belongs to the TRAFAC class dynamin-like GTPase superfamily. Dynamin/Fzo/YdjA family.

In Schizosaccharomyces pombe (strain 972 / ATCC 24843) (Fission yeast), this protein is Vacuolar protein sorting-associated protein 1 (vps1).